The sequence spans 155 residues: Ribosomal RNA large subunit methyltransferase H (155 aa).

S-adenosyl-L-methionine is bound by residues leucine 72, glycine 103, and 122–127 (LSPLTL).

This sequence belongs to the RNA methyltransferase RlmH family. Homodimer.

The protein resides in the cytoplasm. The enzyme catalyses pseudouridine(1915) in 23S rRNA + S-adenosyl-L-methionine = N(3)-methylpseudouridine(1915) in 23S rRNA + S-adenosyl-L-homocysteine + H(+). Functionally, specifically methylates the pseudouridine at position 1915 (m3Psi1915) in 23S rRNA. The polypeptide is Ribosomal RNA large subunit methyltransferase H (Histophilus somni (strain 2336) (Haemophilus somnus)).